The primary structure comprises 131 residues: Profilin-3 (131 aa).

The protein belongs to the profilin family. Occurs in many kinds of cells as a complex with monomeric actin in a 1:1 ratio.

Its subcellular location is the cytoplasm. It is found in the cytoskeleton. Binds to actin and affects the structure of the cytoskeleton. At high concentrations, profilin prevents the polymerization of actin, whereas it enhances it at low concentrations. By binding to PIP2, it inhibits the formation of IP3 and DG. This Triticum aestivum (Wheat) protein is Profilin-3 (PRO3).